Here is a 414-residue protein sequence, read N- to C-terminus: Glutathione gamma-glutamylcysteinyltransferase (414 aa).

The Peptidase C83 domain occupies 37-256 (QLKKSFYKRQ…GYVLLEPMHI (220 aa)).

The protein belongs to the phytochelatin synthase family.

The catalysed reaction is [Glu(-Cys)](n)-Gly + glutathione + H(+) = [Glu(-Cys)](n+1)-Gly + glycine. In terms of biological role, required for detoxification of heavy metals such as cadmium and arsenate. The protein is Glutathione gamma-glutamylcysteinyltransferase of Schizosaccharomyces pombe (strain 972 / ATCC 24843) (Fission yeast).